Here is a 113-residue protein sequence, read N- to C-terminus: UPF0482 protein YnfB (113 aa).

The N-terminal stretch at 1-28 (MKITLSKRIDLLAFLLPCALALSTTVHA) is a signal peptide.

Belongs to the UPF0482 family.

The sequence is that of UPF0482 protein YnfB from Escherichia coli O157:H7.